Reading from the N-terminus, the 215-residue chain is UPF0502 protein Shew_1617 (215 aa).

This sequence belongs to the UPF0502 family.

In Shewanella loihica (strain ATCC BAA-1088 / PV-4), this protein is UPF0502 protein Shew_1617.